The primary structure comprises 258 residues: Ubiquinone/menaquinone biosynthesis C-methyltransferase UbiE (258 aa).

The disordered stretch occupies residues 1 to 20 (MSESRTSADGGMETSYGFRE). S-adenosyl-L-methionine-binding positions include Thr-81, Asp-102, and 130–131 (NA).

This sequence belongs to the class I-like SAM-binding methyltransferase superfamily. MenG/UbiE family.

It catalyses the reaction a 2-demethylmenaquinol + S-adenosyl-L-methionine = a menaquinol + S-adenosyl-L-homocysteine + H(+). The catalysed reaction is a 2-methoxy-6-(all-trans-polyprenyl)benzene-1,4-diol + S-adenosyl-L-methionine = a 5-methoxy-2-methyl-3-(all-trans-polyprenyl)benzene-1,4-diol + S-adenosyl-L-homocysteine + H(+). The protein operates within quinol/quinone metabolism; menaquinone biosynthesis; menaquinol from 1,4-dihydroxy-2-naphthoate: step 2/2. It participates in cofactor biosynthesis; ubiquinone biosynthesis. Its function is as follows. Methyltransferase required for the conversion of demethylmenaquinol (DMKH2) to menaquinol (MKH2) and the conversion of 2-polyprenyl-6-methoxy-1,4-benzoquinol (DDMQH2) to 2-polyprenyl-3-methyl-6-methoxy-1,4-benzoquinol (DMQH2). This Rhizobium etli (strain ATCC 51251 / DSM 11541 / JCM 21823 / NBRC 15573 / CFN 42) protein is Ubiquinone/menaquinone biosynthesis C-methyltransferase UbiE.